Reading from the N-terminus, the 322-residue chain is Phosphoenolpyruvate transferase (322 aa).

Asp-58 contacts 7,8-didemethyl-8-hydroxy-5-deazariboflavin.

It belongs to the CofD family. In terms of assembly, homodimer. Mg(2+) serves as cofactor.

It carries out the reaction enolpyruvoyl-2-diphospho-5'-guanosine + 7,8-didemethyl-8-hydroxy-5-deazariboflavin = dehydro coenzyme F420-0 + GMP + H(+). The protein operates within cofactor biosynthesis; coenzyme F420 biosynthesis. Its function is as follows. Catalyzes the transfer of the phosphoenolpyruvate moiety from enoylpyruvoyl-2-diphospho-5'-guanosine (EPPG) to 7,8-didemethyl-8-hydroxy-5-deazariboflavin (FO) with the formation of dehydro coenzyme F420-0 and GMP. In Thermobifida fusca (strain YX), this protein is Phosphoenolpyruvate transferase.